The primary structure comprises 425 residues: Enolase (425 aa).

Glutamine 162 serves as a coordination point for (2R)-2-phosphoglycerate. Glutamate 204 acts as the Proton donor in catalysis. Residues aspartate 241, glutamate 288, and aspartate 315 each contribute to the Mg(2+) site. (2R)-2-phosphoglycerate-binding residues include lysine 340, arginine 369, serine 370, and lysine 391. Lysine 340 (proton acceptor) is an active-site residue.

It belongs to the enolase family. Mg(2+) serves as cofactor.

It is found in the cytoplasm. The protein resides in the secreted. Its subcellular location is the cell surface. The enzyme catalyses (2R)-2-phosphoglycerate = phosphoenolpyruvate + H2O. The protein operates within carbohydrate degradation; glycolysis; pyruvate from D-glyceraldehyde 3-phosphate: step 4/5. Functionally, catalyzes the reversible conversion of 2-phosphoglycerate (2-PG) into phosphoenolpyruvate (PEP). It is essential for the degradation of carbohydrates via glycolysis. The protein is Enolase of Porphyromonas gingivalis (strain ATCC 33277 / DSM 20709 / CIP 103683 / JCM 12257 / NCTC 11834 / 2561).